A 127-amino-acid chain; its full sequence is UPF0102 protein ERGA_CDS_00540 (127 aa).

The protein belongs to the UPF0102 family.

The chain is UPF0102 protein ERGA_CDS_00540 from Ehrlichia ruminantium (strain Gardel).